The chain runs to 640 residues: 1-deoxy-D-xylulose-5-phosphate synthase (640 aa).

Thiamine diphosphate-binding positions include His79 and 120-122; that span reads GHS. Asp151 is a Mg(2+) binding site. Thiamine diphosphate-binding positions include 152–153, Asn180, Tyr290, and Glu372; that span reads GS. Asn180 contributes to the Mg(2+) binding site.

Belongs to the transketolase family. DXPS subfamily. Homodimer. The cofactor is Mg(2+). Thiamine diphosphate serves as cofactor.

It carries out the reaction D-glyceraldehyde 3-phosphate + pyruvate + H(+) = 1-deoxy-D-xylulose 5-phosphate + CO2. The protein operates within metabolic intermediate biosynthesis; 1-deoxy-D-xylulose 5-phosphate biosynthesis; 1-deoxy-D-xylulose 5-phosphate from D-glyceraldehyde 3-phosphate and pyruvate: step 1/1. Its function is as follows. Catalyzes the acyloin condensation reaction between C atoms 2 and 3 of pyruvate and glyceraldehyde 3-phosphate to yield 1-deoxy-D-xylulose-5-phosphate (DXP). This Rhodopseudomonas palustris (strain BisA53) protein is 1-deoxy-D-xylulose-5-phosphate synthase.